The following is a 561-amino-acid chain: Urocanate hydratase (561 aa).

NAD(+)-binding positions include 52–53 (GG), Gln-130, 176–178 (GMG), Glu-196, Arg-201, 242–243 (NA), 263–267 (QTSAH), 273–274 (YL), and Tyr-322. The active site involves Cys-410. Gly-492 contributes to the NAD(+) binding site.

The protein belongs to the urocanase family. NAD(+) is required as a cofactor.

The protein resides in the cytoplasm. It catalyses the reaction 4-imidazolone-5-propanoate = trans-urocanate + H2O. The protein operates within amino-acid degradation; L-histidine degradation into L-glutamate; N-formimidoyl-L-glutamate from L-histidine: step 2/3. Its function is as follows. Catalyzes the conversion of urocanate to 4-imidazolone-5-propionate. The polypeptide is Urocanate hydratase (Salmonella typhi).